Reading from the N-terminus, the 495-residue chain is Neuronal acetylcholine receptor subunit beta-4 (495 aa).

Residues 1–20 (MRGTPLLLVSLFSLLQDGDC) form the signal peptide. At 21–235 (RLANAEEKLM…IIKRKPLFYT (215 aa)) the chain is on the extracellular side. N-linked (GlcNAc...) asparagine glycans are attached at residues N35, N92, N137, and N165. Cysteines 152 and 166 form a disulfide. A helical transmembrane segment spans residues 236 to 256 (INLIIPCVLITSLAILVFYLP). Residues 257 to 264 (SDCGEKMT) lie on the Cytoplasmic side of the membrane. E261 serves as a coordination point for Na(+). The chain crosses the membrane as a helical span at residues 265–285 (LCISVLLALTFFLLLISKIVP). At 286–297 (PTSLDIPLIGKY) the chain is on the extracellular side. Residues 298-318 (LLFTMVLVTFSIVTTVCVLNV) form a helical membrane-spanning segment. At 319–463 (HHRSPSTHTM…WKFVAMVVDR (145 aa)) the chain is on the cytoplasmic side. The helical transmembrane segment at 464-484 (LFLWVFVFVCILGTMGLFLPP) threads the bilayer. Over 485–495 (LFQIHAPSKDS) the chain is Extracellular.

It belongs to the ligand-gated ion channel (TC 1.A.9) family. Acetylcholine receptor (TC 1.A.9.1) subfamily. Beta-4/CHRNB4 sub-subfamily. In terms of assembly, neuronal AChR is composed of two different types of subunits: alpha and beta. CHRNB4/Beta-4 subunit can be combined to CHRNA2/alpha-2, CHRNA3/alpha-3 or CHRNA4/alpha-4, CHRNA5/alpha-5 and CHRNB3/beta-3 to give rise to functional receptors. Forms stoichiometries such as (CHRNA3)2:(CHRNB4)3 or (CHRNA3:CHRNB4)2:CHRNB3. Interacts with RIC3; which is required for proper folding and assembly. Interacts with LYPD6. As to expression, in the brain, it is detected in the medial habenula. In the peripheral nervous system, it is found at least in the adrenal gland.

It localises to the synaptic cell membrane. Its subcellular location is the cell membrane. The enzyme catalyses Ca(2+)(in) = Ca(2+)(out). It carries out the reaction K(+)(in) = K(+)(out). The catalysed reaction is Na(+)(in) = Na(+)(out). With respect to regulation, activated by a myriad of ligands such as acetylcholine, cytisine, nicotine, choline and epibatidine. nAChR activity is inhibited by the antagonist alpha-conotoxins BuIA and MII, small disulfide-constrained peptides from cone snails. The heteropentamer CHRNA3:CHRNB4 activity is blocked by the alpha-conotoxin ImI and AuIB. Its function is as follows. Component of neuronal acetylcholine receptors (nAChRs) that function as pentameric, ligand-gated cation channels with high calcium permeability among other activities. nAChRs are excitatory neurotrasnmitter receptors formed by a collection of nAChR subunits known to mediate synaptic transmission in the nervous system and the neuromuscular junction. Each nAchR subunit confers differential attributes to channel properties, including activation, deactivation and desensitization kinetics, pH sensitivity, cation permeability, and binding to allosteric modulators. CHRNB4 forms heteropentameric neuronal acetylcholine receptors with CHRNA2, CHRNA3 and CHRNA4, as well as CHRNA5 and CHRNB3 as accesory subunits. CHRNA3:CHRNB4 being predominant in neurons of the autonomic ganglia, it is known as ganglionic nicotinic receptor. CHRNA3:CHRNB4 or CHRNA3:CHRNA5:CHRNB4 play also an important role in the habenulo-interpeduncular tract, modulating the mesolimbic dopamine system and affecting reward circuits and addiction. Hypothalamic CHRNA3:CHRNB4 nAChR activation by nicotine leads to activation of POMC neurons and a decrease in food intake. This Rattus norvegicus (Rat) protein is Neuronal acetylcholine receptor subunit beta-4 (Chrnb4).